Here is a 141-residue protein sequence, read N- to C-terminus: Protein NrdI (141 aa).

It belongs to the NrdI family.

Probably involved in ribonucleotide reductase function. The chain is Protein NrdI from Bifidobacterium animalis subsp. lactis (strain AD011).